A 271-amino-acid chain; its full sequence is Eukaryotic translation initiation factor 2 subunit beta (271 aa).

The C4-type zinc-finger motif lies at 223-247 (CLGCQSPDTILSKENRLFFLRCEKC).

This sequence belongs to the eIF-2-beta/eIF-5 family. As to quaternary structure, eukaryotic translation initiation factor 2 eIF2 is a heterotrimeric complex composed of an alpha, a beta and a gamma subunit.

Its subcellular location is the cytoplasm. It localises to the cytosol. Component of the eIF2 complex that functions in the early steps of protein synthesis by forming a ternary complex with GTP and initiator tRNA. This complex binds to a 40S ribosomal subunit, followed by mRNA binding to form a 43S pre-initiation complex (43S PIC). Junction of the 60S ribosomal subunit to form the 80S initiation complex is preceded by hydrolysis of the GTP bound to eIF2 and release of an eIF2-GDP binary complex. In order for eIF2 to recycle and catalyze another round of initiation, the GDP bound to eIF2 must exchange with GTP by way of a reaction catalyzed by eIF2B. This chain is Eukaryotic translation initiation factor 2 subunit beta, found in Malus domestica (Apple).